The primary structure comprises 573 residues: Solute carrier family 41 member 2 (573 aa).

The Extracellular portion of the chain corresponds to 1 to 162 (MTNCKGRSTI…KESSSIMALQ (162 aa)). A helical transmembrane segment spans residues 163–183 (ILVPFLLAGFGTVTAGMVLDI). The Cytoplasmic portion of the chain corresponds to 184-195 (VQHWDVFKNVTE). A helical transmembrane segment spans residues 196 to 216 (VFILVPALLGLKGNLEMTLAS). Residues 217 to 245 (RLSTAVNIGKMDSPIEKWNLIIGNLALKQ) are Extracellular-facing. Residues 246 to 266 (VQATVVGFLAAVAAVILGWIP) traverse the membrane as a helical segment. The Cytoplasmic segment spans residues 267–282 (EGKYSFSHSILLCSSS). Residues 283–303 (VATAFIASLLQGIIMVGVIVG) form a helical membrane-spanning segment. The Extracellular portion of the chain corresponds to 304-313 (SKKTGINPDN). The chain crosses the membrane as a helical span at residues 314–334 (VATPIAASFGDLITLAILAWI). The Cytoplasmic portion of the chain corresponds to 335–347 (SQGLYTCLETYYY). A helical transmembrane segment spans residues 348–368 (VSPLVGAFFLALTPMGIVIAA). The Extracellular segment spans residues 369 to 376 (KHPATRTV). The chain crosses the membrane as a helical span at residues 377–397 (LHSGWEPVITAMIISSIGGLI). Residues 398–406 (LDTTVSDPN) lie on the Cytoplasmic side of the membrane. A helical transmembrane segment spans residues 407–427 (LVGIVVYTPVINGIGGNLVAI). Topologically, residues 428 to 469 (QASRISTYLHLHSIPGELPEEAKGCYYPCRTYYGTGVNNKSA) are extracellular. Residues 470–490 (QVLLLLVIPGHLIFLYTIHLM) form a helical membrane-spanning segment. The Cytoplasmic segment spans residues 491 to 499 (KSGHTSLTP). The helical transmembrane segment at 500 to 520 (IFIAVYLFAALLQVFTLLWIA) threads the bilayer. Residues 521 to 543 (DWMVHHFWKKGKDPDSFSIPYLT) lie on the Extracellular side of the membrane. The helical transmembrane segment at 544 to 564 (ALGDLLGTALLAVGFHFLWLI) threads the bilayer. Residues 565–573 (GDRDGDVGD) lie on the Cytoplasmic side of the membrane.

Belongs to the SLC41A transporter family.

It is found in the cell membrane. The enzyme catalyses Mg(2+)(in) = Mg(2+)(out). It catalyses the reaction Mn(2+)(in) = Mn(2+)(out). It carries out the reaction Co(2+)(in) = Co(2+)(out). The catalysed reaction is Ni(2+)(in) = Ni(2+)(out). The enzyme catalyses Fe(2+)(in) = Fe(2+)(out). Functionally, acts as a plasma-membrane magnesium transporter. Can also mediate the transport of other divalent metal cations in an order of Ba(2+) &gt; Ni(2+) &gt; Co(2+) &gt; Fe(2+) &gt; Mn(2+). The polypeptide is Solute carrier family 41 member 2 (SLC41A2) (Gallus gallus (Chicken)).